The sequence spans 568 residues: NADPH oxidase 3 (568 aa).

Residues 1 to 12 are Cytoplasmic-facing; sequence MPTCWILNESVS. A helical transmembrane segment spans residues 13–33; that stretch reads FVVALLWLAINIYLFIDTFCW. Over 34–49 the chain is Extracellular; the sequence is YAEEESFFYTRVILGS. A helical transmembrane segment spans residues 50–70; sequence ALAWARASAVCLNFNCMLILL. In terms of domain architecture, Ferric oxidoreductase spans 55–284; sequence RASAVCLNFN…VVLYACEIII (230 aa). Residues 71-103 lie on the Cytoplasmic side of the membrane; sequence PVSRNFVSLVRGTSVCCRGPWRRQLDKNLKFHK. Residues 104–124 traverse the membrane as a helical segment; that stretch reads LVAYGIAVNSVIHIVAHLFNL. Topologically, residues 125–167 are extracellular; that stretch reads ERYHLGQAKDAEGLLAALSKLGNAPNESYLNPVRTLYTGTTTQ. Residues 168–188 form a helical membrane-spanning segment; it reads LLMTVSGITGLVISLALILIM. The Cytoplasmic portion of the chain corresponds to 189–201; that stretch reads TSSTEFIRQSSYE. Residues 202 to 222 traverse the membrane as a helical segment; the sequence is LFWYTHHIFIFLFISLAIHGG. At 223 to 395 the chain is on the extracellular side; that stretch reads GRIIRGQTPE…DGPFGGSLAD (173 aa). Asn-238 carries N-linked (GlcNAc...) asparagine glycosylation. The 111-residue stretch at 285–395 folds into the FAD-binding FR-type domain; that stretch reads RFWRSHQEVV…DGPFGGSLAD (111 aa). A helical transmembrane segment spans residues 396–416; sequence VFHYPVSVCIATGIGVTPFAS. Topologically, residues 417–568 are cytoplasmic; that stretch reads LLKSVWYKCC…VHFYYNKENF (152 aa).

As to quaternary structure, forms a heterodimer with CYBA/p22phox which is essential for its activity and cell membrane localization. Heme is required as a cofactor. Post-translationally, N-glycosylated in a CYBA/p22phox-dependent manner. In terms of tissue distribution, expressed in the inner ear by the spiral glanglia and the organ of Corti.

It is found in the cell membrane. The catalysed reaction is NADPH + 2 O2 = 2 superoxide + NADP(+) + H(+). With respect to regulation, activated by the ototoxic drug cisplatin. Activated by NOXO1. Cooperatively activated by NCF1 and NCF2 or NOXA1 in a phorbol 12-myristate 13-acetate (PMA)-dependent manner. Inhibited by diphenyleneiodonium chloride. In terms of biological role, NADPH oxidase that catalyzes the generation of superoxide from molecular oxygen utilizing NADPH as an electron donor, upon formation of a complex with CYBA/p22phox. Plays a role in the biogenesis of otoconia/otolith, which are crystalline structures of the inner ear involved in the perception of gravity. This Rattus norvegicus (Rat) protein is NADPH oxidase 3 (Nox3).